Here is a 430-residue protein sequence, read N- to C-terminus: Histidine--tRNA ligase (430 aa).

The protein belongs to the class-II aminoacyl-tRNA synthetase family. Homodimer.

The protein localises to the cytoplasm. The enzyme catalyses tRNA(His) + L-histidine + ATP = L-histidyl-tRNA(His) + AMP + diphosphate + H(+). This Acaryochloris marina (strain MBIC 11017) protein is Histidine--tRNA ligase.